The following is a 245-amino-acid chain: 1-(5-phosphoribosyl)-5-[(5-phosphoribosylamino)methylideneamino] imidazole-4-carboxamide isomerase (245 aa).

Asp-8 acts as the Proton acceptor in catalysis. Asp-129 acts as the Proton donor in catalysis.

Belongs to the HisA/HisF family.

It is found in the cytoplasm. The enzyme catalyses 1-(5-phospho-beta-D-ribosyl)-5-[(5-phospho-beta-D-ribosylamino)methylideneamino]imidazole-4-carboxamide = 5-[(5-phospho-1-deoxy-D-ribulos-1-ylimino)methylamino]-1-(5-phospho-beta-D-ribosyl)imidazole-4-carboxamide. Its pathway is amino-acid biosynthesis; L-histidine biosynthesis; L-histidine from 5-phospho-alpha-D-ribose 1-diphosphate: step 4/9. The sequence is that of 1-(5-phosphoribosyl)-5-[(5-phosphoribosylamino)methylideneamino] imidazole-4-carboxamide isomerase from Rhodopseudomonas palustris (strain BisB5).